The chain runs to 642 residues: 4-hydroxy-3-methylbut-2-enyl diphosphate reductase (642 aa).

Positions 1–282 are 4-hydroxy-3-methylbut-2-enyl diphosphate reductase; it reads MRKVMLAEKA…EEAISKMSEN (282 aa). C13 lines the [4Fe-4S] cluster pocket. (2E)-4-hydroxy-3-methylbut-2-enyl diphosphate contacts are provided by H42 and H77. Dimethylallyl diphosphate-binding residues include H42 and H77. Isopentenyl diphosphate is bound by residues H42 and H77. C99 lines the [4Fe-4S] cluster pocket. H127 serves as a coordination point for (2E)-4-hydroxy-3-methylbut-2-enyl diphosphate. H127 contacts dimethylallyl diphosphate. H127 is an isopentenyl diphosphate binding site. E129 serves as the catalytic Proton donor. T165 is a binding site for (2E)-4-hydroxy-3-methylbut-2-enyl diphosphate. A [4Fe-4S] cluster-binding site is contributed by C193. 4 residues coordinate (2E)-4-hydroxy-3-methylbut-2-enyl diphosphate: S221, S222, N223, and S266. S221, S222, N223, and S266 together coordinate dimethylallyl diphosphate. Residues S221, S222, N223, and S266 each coordinate isopentenyl diphosphate. 3 consecutive S1 motif domains span residues 309 to 377, 484 to 552, and 569 to 638; these read GASV…LSVK, GQVV…LSVK, and GSVV…LSIR.

It in the N-terminal section; belongs to the IspH family. [4Fe-4S] cluster is required as a cofactor.

The catalysed reaction is isopentenyl diphosphate + 2 oxidized [2Fe-2S]-[ferredoxin] + H2O = (2E)-4-hydroxy-3-methylbut-2-enyl diphosphate + 2 reduced [2Fe-2S]-[ferredoxin] + 2 H(+). It carries out the reaction dimethylallyl diphosphate + 2 oxidized [2Fe-2S]-[ferredoxin] + H2O = (2E)-4-hydroxy-3-methylbut-2-enyl diphosphate + 2 reduced [2Fe-2S]-[ferredoxin] + 2 H(+). The protein operates within isoprenoid biosynthesis; dimethylallyl diphosphate biosynthesis; dimethylallyl diphosphate from (2E)-4-hydroxy-3-methylbutenyl diphosphate: step 1/1. It functions in the pathway isoprenoid biosynthesis; isopentenyl diphosphate biosynthesis via DXP pathway; isopentenyl diphosphate from 1-deoxy-D-xylulose 5-phosphate: step 6/6. Functionally, catalyzes the conversion of 1-hydroxy-2-methyl-2-(E)-butenyl 4-diphosphate (HMBPP) into a mixture of isopentenyl diphosphate (IPP) and dimethylallyl diphosphate (DMAPP). Acts in the terminal step of the DOXP/MEP pathway for isoprenoid precursor biosynthesis. This is 4-hydroxy-3-methylbut-2-enyl diphosphate reductase from Clostridium acetobutylicum (strain ATCC 824 / DSM 792 / JCM 1419 / IAM 19013 / LMG 5710 / NBRC 13948 / NRRL B-527 / VKM B-1787 / 2291 / W).